A 667-amino-acid chain; its full sequence is MNEIEQRIAELNKLLHEYGYAYYVLDKPVVADSVYDQLLHELIALEEANPSLIFPDSPTQRVGGTVVEGFKKVTHDYPMLSLSNAFNEADLQEFDRKVRQAIGDHFSYVCELKIDGLAISLKYENGVFVQGATRGDGVVGEEITANLKTIHAIPLRLKEPITIEVRGEAYMPKKSFEKLNAQRADNGEELFANPRNAAAGSLRQLDPKIAASRQLSTFIYAIGGDGEIYGIDGHAEMLDYLEDLGFPSNKERQRCSTIEEVMAFIEHWTENRPHLAYEIDGIVIKVDRYAQQDELGYTAKSPRWAIAYKFPAEEVVTTLLDIDLTVGRTGVVTPTAILTPVQVAGTTVQRASLHNEDLIRDKDIRLGDTVIIRKAGDIIPQVVGVLIEQRPENSVPFEMPKNCPVCDSELIRIEGEVALRCVNPACFAQIAESIKYFVSRNAMNIDGLGDKVVEQLLRADLIHDVSDLYHLTIEQLVELERMGEKSATNLVNAIQASKENSMERLLIGLGIRHVGEKAAKIVSEQFGSMEAVMAATEEQLVAIYEIGDKMASSLVEYFSNDDARAVIERLAEVGVNMTFKGKKVEVVVGDNPFAGKTIVLTGKLEQLTRNEAKAKIEELGGTVTGSVSKKTDLVIAGEDAGSKLAKAEQLGIEVWNEDNLIEQLNLI.

NAD(+) is bound by residues 32-36 (DSVYD), 81-82 (SL), and Glu111. Lys113 acts as the N6-AMP-lysine intermediate in catalysis. NAD(+)-binding residues include Arg134, Glu168, Lys285, and Lys309. Positions 403, 406, 421, and 426 each coordinate Zn(2+). Residues 588-667 (VGDNPFAGKT…DNLIEQLNLI (80 aa)) form the BRCT domain.

Belongs to the NAD-dependent DNA ligase family. LigA subfamily. Mg(2+) serves as cofactor. The cofactor is Mn(2+).

It catalyses the reaction NAD(+) + (deoxyribonucleotide)n-3'-hydroxyl + 5'-phospho-(deoxyribonucleotide)m = (deoxyribonucleotide)n+m + AMP + beta-nicotinamide D-nucleotide.. Functionally, DNA ligase that catalyzes the formation of phosphodiester linkages between 5'-phosphoryl and 3'-hydroxyl groups in double-stranded DNA using NAD as a coenzyme and as the energy source for the reaction. It is essential for DNA replication and repair of damaged DNA. This is DNA ligase from Lysinibacillus sphaericus (strain C3-41).